The chain runs to 420 residues: Gamma-glutamyl phosphate reductase (420 aa).

The protein belongs to the gamma-glutamyl phosphate reductase family.

Its subcellular location is the cytoplasm. It carries out the reaction L-glutamate 5-semialdehyde + phosphate + NADP(+) = L-glutamyl 5-phosphate + NADPH + H(+). The protein operates within amino-acid biosynthesis; L-proline biosynthesis; L-glutamate 5-semialdehyde from L-glutamate: step 2/2. Its function is as follows. Catalyzes the NADPH-dependent reduction of L-glutamate 5-phosphate into L-glutamate 5-semialdehyde and phosphate. The product spontaneously undergoes cyclization to form 1-pyrroline-5-carboxylate. In Streptococcus pneumoniae (strain JJA), this protein is Gamma-glutamyl phosphate reductase.